We begin with the raw amino-acid sequence, 485 residues long: Ribulose bisphosphate carboxylase large chain (485 aa).

Residues Asn124 and Thr174 each contribute to the substrate site. The Proton acceptor role is filled by Lys176. Lys178 is a binding site for substrate. 3 residues coordinate Mg(2+): Lys202, Asp204, and Glu205. Lys202 carries the N6-carboxylysine modification. Catalysis depends on His294, which acts as the Proton acceptor. Substrate is bound by residues Arg295, His327, and Ser379.

The protein belongs to the RuBisCO large chain family. Type I subfamily. In terms of assembly, heterohexadecamer of 8 large chains and 8 small chains. The cofactor is Mg(2+).

It catalyses the reaction 2 (2R)-3-phosphoglycerate + 2 H(+) = D-ribulose 1,5-bisphosphate + CO2 + H2O. It carries out the reaction D-ribulose 1,5-bisphosphate + O2 = 2-phosphoglycolate + (2R)-3-phosphoglycerate + 2 H(+). RuBisCO catalyzes two reactions: the carboxylation of D-ribulose 1,5-bisphosphate, the primary event in carbon dioxide fixation, as well as the oxidative fragmentation of the pentose substrate. Both reactions occur simultaneously and in competition at the same active site. The sequence is that of Ribulose bisphosphate carboxylase large chain from Rhodopseudomonas palustris (strain BisA53).